We begin with the raw amino-acid sequence, 130 residues long: Small ribosomal subunit protein uS9 (130 aa).

Belongs to the universal ribosomal protein uS9 family.

This Pseudoalteromonas atlantica (strain T6c / ATCC BAA-1087) protein is Small ribosomal subunit protein uS9.